A 341-amino-acid chain; its full sequence is DNA-directed RNA polymerase subunit alpha (341 aa).

Residues 1 to 233 are alpha N-terminal domain (alpha-NTD); it reads MVREEVAGST…DLFLPFLHAE (233 aa). Residues 269 to 341 form an alpha C-terminal domain (alpha-CTD) region; that stretch reads IPLNCIFIDQ…IDLLKNKLSF (73 aa).

This sequence belongs to the RNA polymerase alpha chain family. In plastids the minimal PEP RNA polymerase catalytic core is composed of four subunits: alpha, beta, beta', and beta''. When a (nuclear-encoded) sigma factor is associated with the core the holoenzyme is formed, which can initiate transcription.

The protein localises to the plastid. Its subcellular location is the chloroplast. The catalysed reaction is RNA(n) + a ribonucleoside 5'-triphosphate = RNA(n+1) + diphosphate. DNA-dependent RNA polymerase catalyzes the transcription of DNA into RNA using the four ribonucleoside triphosphates as substrates. The sequence is that of DNA-directed RNA polymerase subunit alpha from Lolium perenne (Perennial ryegrass).